Consider the following 83-residue polypeptide: Large ribosomal subunit protein bL31B (83 aa).

The protein belongs to the bacterial ribosomal protein bL31 family. Type B subfamily. Part of the 50S ribosomal subunit.

This chain is Large ribosomal subunit protein bL31B, found in Lactobacillus gasseri (strain ATCC 33323 / DSM 20243 / BCRC 14619 / CIP 102991 / JCM 1131 / KCTC 3163 / NCIMB 11718 / NCTC 13722 / AM63).